The primary structure comprises 498 residues: ATP synthase subunit beta, chloroplastic (498 aa).

172 to 179 (GGAGVGKT) provides a ligand contact to ATP.

It belongs to the ATPase alpha/beta chains family. F-type ATPases have 2 components, CF(1) - the catalytic core - and CF(0) - the membrane proton channel. CF(1) has five subunits: alpha(3), beta(3), gamma(1), delta(1), epsilon(1). CF(0) has four main subunits: a(1), b(1), b'(1) and c(9-12).

It is found in the plastid. Its subcellular location is the chloroplast thylakoid membrane. It catalyses the reaction ATP + H2O + 4 H(+)(in) = ADP + phosphate + 5 H(+)(out). In terms of biological role, produces ATP from ADP in the presence of a proton gradient across the membrane. The catalytic sites are hosted primarily by the beta subunits. In Nymphaea alba (White water-lily), this protein is ATP synthase subunit beta, chloroplastic.